The chain runs to 390 residues: MANNEIMTINMGPQHPSTHGVLRMVIELDGETILKIDPDIGYLHRGVEKLSEHRTYHQTLPLTDRLDYLAPMSNNLGYMLAVEKLLGIEVPERAQTIRIIMTELTRLQSHLVWLACHALDIGAMTVFIYAFREREVIMETYELISGARMTSNFFRAGGLSQDVPAEFEKKVRDFVAEMPGFIDTYEGLLTGNPIWRKRTIGNGVISAEDATDIGITGPALRGSGVDFDLRRDIPYAGYENYQFKVPTGKNCDTFDRYQVRLIEMRESCKIVNQALERLKPGPVLADAPQVCYPPKDSVYNSIEGLIHHFKIASEGYPVPEGEVYMGVEAPKGELGFYLVSDGSSKPYRMRVRPPSFVNLQAIEKMAKGAMLADLVAIIGTLDIVLGEIDR.

This sequence belongs to the complex I 49 kDa subunit family. In terms of assembly, NDH-1 is composed of 14 different subunits. Subunits NuoB, C, D, E, F, and G constitute the peripheral sector of the complex.

It localises to the cell inner membrane. It catalyses the reaction a quinone + NADH + 5 H(+)(in) = a quinol + NAD(+) + 4 H(+)(out). Functionally, NDH-1 shuttles electrons from NADH, via FMN and iron-sulfur (Fe-S) centers, to quinones in the respiratory chain. The immediate electron acceptor for the enzyme in this species is believed to be ubiquinone. Couples the redox reaction to proton translocation (for every two electrons transferred, four hydrogen ions are translocated across the cytoplasmic membrane), and thus conserves the redox energy in a proton gradient. The chain is NADH-quinone oxidoreductase subunit D from Trichlorobacter lovleyi (strain ATCC BAA-1151 / DSM 17278 / SZ) (Geobacter lovleyi).